A 982-amino-acid polypeptide reads, in one-letter code: Serine/threonine-protein kinase SULU (982 aa).

In terms of domain architecture, Protein kinase spans 30–289 (YQDLREIGHG…AEECFRHPFI (260 aa)). ATP-binding positions include 36 to 44 (IGHGSFGAV) and Lys-59. The active-site Proton acceptor is the Asp-153. Disordered regions lie at residues 331-484 (GKEG…PLDT), 592-620 (QNNELDKRKKDIEDGEKKMKKTKNSQNQQ), 751-789 (LETQHEAESASQNEYTQRQQDELRKKHAMQSRQQPRDLK), and 957-982 (RTGSTSRSSGGIAPGVGNSSSIQMAM). Residues 353-373 (SIGRAGDSASSRSASLTSFRS) show a composition bias toward low complexity. Over residues 421-431 (QMLSSTSTSGV) the composition is skewed to polar residues. Residues 459 to 472 (IPTSQPTSKSESSS) show a composition bias toward low complexity. Residues 595–608 (ELDKRKKDIEDGEK) show a composition bias toward basic and acidic residues. Residues 759–768 (SASQNEYTQR) are compositionally biased toward polar residues. The segment covering 957-967 (RTGSTSRSSGG) has biased composition (low complexity). The segment covering 973–982 (GNSSSIQMAM) has biased composition (polar residues).

It belongs to the protein kinase superfamily. Ser/Thr protein kinase family. STE20 subfamily. Mg(2+) is required as a cofactor. As to expression, expressed in the pharynx, including the pharyngeal muscle of the metacorpus, the isthmus, and the terminal bulb; in the intestine, including the pharyngeointestinal valve between the pharynx and the intestine, a structure near the anus likely to be the anal sphincter and the excretory cell and in several ring neurons.

It is found in the cytoplasm. The protein resides in the cytoskeleton. The protein localises to the cell cortex. The enzyme catalyses L-seryl-[protein] + ATP = O-phospho-L-seryl-[protein] + ADP + H(+). The catalysed reaction is L-threonyl-[protein] + ATP = O-phospho-L-threonyl-[protein] + ADP + H(+). Its function is as follows. Acts as a negative regulator of cortical contractions during early embryonic cell division, possibly by regulating rho-1-dependent actomyosin contractility. Plays a role in polarity establishment in early embryos by regulating the size of the anterior and posterior cortex in the first asymmetric cell division. Might play a role in cell cycle progression. In the germline, involved in the regulation of meiotic progression during oogenesis, possibly by modulating the timing of mpk-1 activation. Plays a role in meiotic recombination events. Involved in pharyngeal pumping. In Caenorhabditis elegans, this protein is Serine/threonine-protein kinase SULU (kin-18).